Reading from the N-terminus, the 286-residue chain is Shikimate dehydrogenase (NADP(+)) (286 aa).

Shikimate-binding positions include 20 to 22 and Thr65; that span reads SLS. Residue Lys69 is the Proton acceptor of the active site. Asp81 is a binding site for NADP(+). 2 residues coordinate shikimate: Asn90 and Asp105. Residues 128–132 and Thr217 contribute to the NADP(+) site; that span reads GAGGA. Tyr219 serves as a coordination point for shikimate. Residue Gly240 coordinates NADP(+).

This sequence belongs to the shikimate dehydrogenase family. Homodimer.

The enzyme catalyses shikimate + NADP(+) = 3-dehydroshikimate + NADPH + H(+). It functions in the pathway metabolic intermediate biosynthesis; chorismate biosynthesis; chorismate from D-erythrose 4-phosphate and phosphoenolpyruvate: step 4/7. In terms of biological role, involved in the biosynthesis of the chorismate, which leads to the biosynthesis of aromatic amino acids. Catalyzes the reversible NADPH linked reduction of 3-dehydroshikimate (DHSA) to yield shikimate (SA). This is Shikimate dehydrogenase (NADP(+)) from Syntrophobacter fumaroxidans (strain DSM 10017 / MPOB).